The chain runs to 370 residues: D-alanine--D-alanine ligase (370 aa).

The ATP-grasp domain occupies 144–352 (KKIFADAGIP…YGALIERLVD (209 aa)). 177–232 (EEVLTYPVFVKPANLGSSVGISKATNKKELADAMTEAFLYDRRVVVEQGVVAREIE) is a binding site for ATP. The Mg(2+) site is built by aspartate 306, glutamate 319, and asparagine 321.

This sequence belongs to the D-alanine--D-alanine ligase family. Mg(2+) is required as a cofactor. The cofactor is Mn(2+).

Its subcellular location is the cytoplasm. It catalyses the reaction 2 D-alanine + ATP = D-alanyl-D-alanine + ADP + phosphate + H(+). It participates in cell wall biogenesis; peptidoglycan biosynthesis. Functionally, cell wall formation. The sequence is that of D-alanine--D-alanine ligase from Listeria monocytogenes serotype 4b (strain F2365).